A 742-amino-acid polypeptide reads, in one-letter code: Transcription factor FFUJ_09177 (742 aa).

A DNA-binding region (zn(2)-C6 fungal-type) is located at residues 15 to 41 (CVSCARSKQRCDGHSPCGRCSLKNLDC). Disordered stretches follow at residues 50 to 80 (GQNSTRGASPQSPSASRESYSQNTLPVVQSQ) and 218 to 244 (HSLDISSYQGQSNQTSPETTSHSSVRD). The segment covering 218–240 (HSLDISSYQGQSNQTSPETTSHS) has biased composition (polar residues).

The protein resides in the nucleus. Functionally, transcription factor; part of the DMATS1 gene cluster that mediates the biosynthesis of a reversely N-prenylated monomeric L-tryptophan (r-N-DMAT). Seems not to regulate the expression of the DMATS1 cluster. In Gibberella fujikuroi (strain CBS 195.34 / IMI 58289 / NRRL A-6831) (Bakanae and foot rot disease fungus), this protein is Transcription factor FFUJ_09177.